Consider the following 832-residue polypeptide: Protein wech (832 aa).

Over residues 1–14 (MMELLSNNSVPQQM) the composition is skewed to polar residues. Residues 1–42 (MMELLSNNSVPQQMASSNAPSANNVAHSSTANGSGGGSVSSN) form a disordered region. Positions 15 to 32 (ASSNAPSANNVAHSSTAN) are enriched in low complexity. Ser107 bears the Phosphoserine mark. 2 B box-type zinc fingers span residues 118–163 (NSSI…IVSL) and 184–224 (SGNF…YASI). The Zn(2+) site is built by Cys123, Cys126, Cys145, His149, Cys189, His192, Cys211, and His216. Phosphoserine is present on residues Ser470, Ser475, and Ser506. NHL repeat units lie at residues 537–580 (SLSF…FNPD), 584–627 (KFKF…FTAS), 631–674 (LLKF…FDSE), 680–722 (QIVF…IDPD), and 727–770 (LSVK…FNQN).

Interacts with the head domain of rhea and the kinase domain of Ilk. Interacts with AGO1. Interacts with mei-P26. As to expression, expressed in ovarian germline stem cells (at protein level). Expressed ubiquitously in all epithelial cells during early stages of embryogenesis. Specifically expressed at epidermal muscle attachment site.

Functionally, vital for larval development. Plays a role in tumor formation. A crucial component for the physical link between integrins and the cytoskeleton in the epidermal muscle attachment sites. This is Protein wech (wech) from Drosophila melanogaster (Fruit fly).